Here is a 431-residue protein sequence, read N- to C-terminus: Serine--tRNA ligase (431 aa).

Position 235–237 (235–237 (TAE)) interacts with L-serine. ATP-binding positions include 266-268 (RRE) and Val282. Glu289 contributes to the L-serine binding site. 353-356 (EASS) serves as a coordination point for ATP. Position 389 (Ser389) interacts with L-serine.

It belongs to the class-II aminoacyl-tRNA synthetase family. Type-1 seryl-tRNA synthetase subfamily. As to quaternary structure, homodimer. The tRNA molecule binds across the dimer.

The protein localises to the cytoplasm. The enzyme catalyses tRNA(Ser) + L-serine + ATP = L-seryl-tRNA(Ser) + AMP + diphosphate + H(+). It carries out the reaction tRNA(Sec) + L-serine + ATP = L-seryl-tRNA(Sec) + AMP + diphosphate + H(+). The protein operates within aminoacyl-tRNA biosynthesis; selenocysteinyl-tRNA(Sec) biosynthesis; L-seryl-tRNA(Sec) from L-serine and tRNA(Sec): step 1/1. Its function is as follows. Catalyzes the attachment of serine to tRNA(Ser). Is also able to aminoacylate tRNA(Sec) with serine, to form the misacylated tRNA L-seryl-tRNA(Sec), which will be further converted into selenocysteinyl-tRNA(Sec). The sequence is that of Serine--tRNA ligase from Pelodictyon phaeoclathratiforme (strain DSM 5477 / BU-1).